The following is a 147-amino-acid chain: Transcriptional repressor NrdR (147 aa).

A zinc finger spans residues 3–34 (CLFCRSDDTKVIDSRTSEDGISIRRRRECQLC). The 91-residue stretch at 46 to 136 (LTVIKRNGTS…VYQDFDSLED (91 aa)) folds into the ATP-cone domain.

This sequence belongs to the NrdR family. Zn(2+) serves as cofactor.

In terms of biological role, negatively regulates transcription of bacterial ribonucleotide reductase nrd genes and operons by binding to NrdR-boxes. This chain is Transcriptional repressor NrdR, found in Tropheryma whipplei (strain TW08/27) (Whipple's bacillus).